Consider the following 499-residue polypeptide: MSQEEHNHEELNDQLQVRRDKMNQLRDNGIDPFGARFERTHQSQEVISAYQDLTKEELEEKAIEVTIAGRMMTKRGKGKAGFAHLQDLEGQIQIYVRKDSVGDDQYEIFKSSDLGDLIGVTGKVFKTNVGELSVKATSFELLTKALRPLPDKYHGLKDVEQRYRQRYLDLIVNPDSKHTFITRSKIIQAMRRYLDDHGYLEVETPTMHSIPGGASARPFITHHNALDIPLYMRIAIELHLKRLIVGGLEKVYEIGRVFRNEGVSTRHNPEFTMIELYEAYADYKDIMSLTENLVAHIAQEVLGTTTIQYGEEQIDLKPEWKRIHMVDAVKEATGVDFWEEVTVEQAREYAKEHEVEIKDSMTVGHIINEFFEQKIEETLIQPTFIYGHPVEISPLAKKNPEDPRFTDRFELFIVGREHANAFTELNDPIDQRERFEAQLKEREAGNDEAHLMDEDFVEALEYGMPPTGGLGIGIDRLVMLLTNAPSIRDVLLFPQMRQR.

Residues glutamate 410 and glutamate 417 each coordinate Mg(2+).

The protein belongs to the class-II aminoacyl-tRNA synthetase family. As to quaternary structure, homodimer. Mg(2+) serves as cofactor.

The protein resides in the cytoplasm. It carries out the reaction tRNA(Lys) + L-lysine + ATP = L-lysyl-tRNA(Lys) + AMP + diphosphate. The protein is Lysine--tRNA ligase (lysS) of Bacillus subtilis (strain 168).